Reading from the N-terminus, the 77-residue chain is Small ribosomal subunit protein uS17 (77 aa).

Belongs to the universal ribosomal protein uS17 family. As to quaternary structure, part of the 30S ribosomal subunit.

Functionally, one of the primary rRNA binding proteins, it binds specifically to the 5'-end of 16S ribosomal RNA. This Rickettsia prowazekii (strain Madrid E) protein is Small ribosomal subunit protein uS17.